A 422-amino-acid polypeptide reads, in one-letter code: Glutamate-1-semialdehyde 2,1-aminomutase (422 aa).

Lysine 265 carries the N6-(pyridoxal phosphate)lysine modification.

The protein belongs to the class-III pyridoxal-phosphate-dependent aminotransferase family. HemL subfamily. Pyridoxal 5'-phosphate is required as a cofactor.

The protein localises to the cytoplasm. It carries out the reaction (S)-4-amino-5-oxopentanoate = 5-aminolevulinate. Its pathway is porphyrin-containing compound metabolism; protoporphyrin-IX biosynthesis; 5-aminolevulinate from L-glutamyl-tRNA(Glu): step 2/2. The chain is Glutamate-1-semialdehyde 2,1-aminomutase from Methanococcoides burtonii (strain DSM 6242 / NBRC 107633 / OCM 468 / ACE-M).